The following is a 748-amino-acid chain: Rho GTPase-activating protein 24 (748 aa).

The 107-residue stretch at 18–124 (NATKCGWLRK…WVKSIRRVIW (107 aa)) folds into the PH domain. The 195-residue stretch at 134–328 (QKLEDTVRYE…VMISKHDRLF (195 aa)) folds into the Rho-GAP domain. Residues 328-476 (FPKDTEPQSK…SSGTKMGTHS (149 aa)) form a disordered region. Polar residues-rich tracts occupy residues 335-347 (QSKP…SNNN) and 356-368 (GQLQ…NTKE). S369, S391, S396, S398, S402, S413, S415, and S437 each carry phosphoserine. Positions 369–381 (SPVRRCSWDKPES) are enriched in basic and acidic residues. The span at 382-405 (PQRSSMDNGSPTALSGSKTNSPRN) shows a compositional bias: polar residues. The span at 432 to 476 (IVTNGSFSSSNAEGVEKTQTTPNGSLQARRTSSLKSSGTKMGTHS) shows a compositional bias: polar residues. At T452 the chain carries Phosphothreonine. The residue at position 495 (S495) is a Phosphoserine. The tract at residues 582–640 (DFYGGNFEDPVLDGPPQDDLSHPGDYENKSDRRSVGGRSSRATSSSDNSETFVGNTSSN) is disordered. Positions 600 to 615 (DLSHPGDYENKSDRRS) are enriched in basic and acidic residues. Residues 617 to 630 (GGRSSRATSSSDNS) are compositionally biased toward low complexity. The span at 631–640 (ETFVGNTSSN) shows a compositional bias: polar residues. Residues 649-729 (SSLKQEMTKQ…KEMEQFFSTF (81 aa)) are a coiled coil.

As to quaternary structure, interacts with FLNA. In terms of processing, phosphorylated by ROCK, leading to activate the RacGAP activity.

It localises to the cytoplasm. The protein resides in the cytoskeleton. The protein localises to the cell junction. It is found in the adherens junction. Its subcellular location is the focal adhesion. It localises to the cell projection. In terms of biological role, rho GTPase-activating protein involved in cell polarity, cell morphology and cytoskeletal organization. Acts as a GTPase activator for the Rac-type GTPase by converting it to an inactive GDP-bound state. Controls actin remodeling by inactivating Rac downstream of Rho leading to suppress leading edge protrusion and promotes cell retraction to achieve cellular polarity. Able to suppress RAC1 and CDC42 activity in vitro. Overexpression induces cell rounding with partial or complete disruption of actin stress fibers and formation of membrane ruffles, lamellipodia, and filopodia. Isoform 2 is a vascular cell-specific GAP involved in modulation of angiogenesis. The chain is Rho GTPase-activating protein 24 (Arhgap24) from Rattus norvegicus (Rat).